The following is a 78-amino-acid chain: uncharacterized protein (78 aa).

A signal peptide spans 1 to 27; that stretch reads MQNSKTDMCAALWAVTGLVLNVAVRFA.

This is an uncharacterized protein from Dryophytes versicolor (chameleon treefrog).